The following is a 250-amino-acid chain: Pyridoxine 5'-phosphate synthase (250 aa).

Residues Asn-8 and Arg-19 each contribute to the 3-amino-2-oxopropyl phosphate site. His-44 (proton acceptor) is an active-site residue. 1-deoxy-D-xylulose 5-phosphate contacts are provided by Arg-46 and His-51. Glu-76 serves as the catalytic Proton acceptor. Thr-106 contacts 1-deoxy-D-xylulose 5-phosphate. Catalysis depends on His-200, which acts as the Proton donor. 3-amino-2-oxopropyl phosphate contacts are provided by residues Asp-201 and 223–224 (GH).

This sequence belongs to the PNP synthase family. Homooctamer; tetramer of dimers.

Its subcellular location is the cytoplasm. The enzyme catalyses 3-amino-2-oxopropyl phosphate + 1-deoxy-D-xylulose 5-phosphate = pyridoxine 5'-phosphate + phosphate + 2 H2O + H(+). It participates in cofactor biosynthesis; pyridoxine 5'-phosphate biosynthesis; pyridoxine 5'-phosphate from D-erythrose 4-phosphate: step 5/5. Its function is as follows. Catalyzes the complicated ring closure reaction between the two acyclic compounds 1-deoxy-D-xylulose-5-phosphate (DXP) and 3-amino-2-oxopropyl phosphate (1-amino-acetone-3-phosphate or AAP) to form pyridoxine 5'-phosphate (PNP) and inorganic phosphate. The protein is Pyridoxine 5'-phosphate synthase of Rhizobium meliloti (strain 1021) (Ensifer meliloti).